The primary structure comprises 394 residues: MKYPTWLRRIGGYLLAFAVGTAFGIANLPHAVAAADDLPPAPVITAQASVPLTSESFVAAAVSRSGPAVVRIDTETVVTRRTDPILDDPFFQEFFGRSFPVPPRERRIAGQGSGFIIDNSGIILTNAHVVDGASKVVVTLRDGRTFDGQVRGTDEVTDLAVVKIEPQGSALPVAPLGTSSNLQVGDWAIAVGNPVGLDNTVTLGIISTLGRSAAQAGIPDKRVEFIQTDAAINPGNSGGPLLNARGEVIGINTAIRADATGIGFAIPIDQAKAIQNTLAAGGTVPHPYIGVQMMNITVDQAQQNNRNPNSPFIIPEVDGILVMRVLPGTPAERAGIRRGDVIVAVDGTPISDGARLQRIVEQAGLNKALKLDLLRGDRRLSLTVQTAQLRNPTS.

A signal peptide spans 1–24 (MKYPTWLRRIGGYLLAFAVGTAFG). In terms of domain architecture, PDZ spans 293–377 (MMNITVDQAQ…ALKLDLLRGD (85 aa)).

Belongs to the peptidase S1C family.

The protein localises to the periplasm. In terms of biological role, a putative protease, its function overlaps that of the related putative proteases HhoB and HtrA. This chain is Putative serine protease HhoA (hhoA), found in Synechocystis sp. (strain ATCC 27184 / PCC 6803 / Kazusa).